A 413-amino-acid chain; its full sequence is Tryptophan synthase beta chain (413 aa).

K106 bears the N6-(pyridoxal phosphate)lysine mark.

The protein belongs to the TrpB family. Tetramer of two alpha and two beta chains. Pyridoxal 5'-phosphate serves as cofactor.

It carries out the reaction (1S,2R)-1-C-(indol-3-yl)glycerol 3-phosphate + L-serine = D-glyceraldehyde 3-phosphate + L-tryptophan + H2O. Its pathway is amino-acid biosynthesis; L-tryptophan biosynthesis; L-tryptophan from chorismate: step 5/5. Its function is as follows. The beta subunit is responsible for the synthesis of L-tryptophan from indole and L-serine. This Methylobacterium radiotolerans (strain ATCC 27329 / DSM 1819 / JCM 2831 / NBRC 15690 / NCIMB 10815 / 0-1) protein is Tryptophan synthase beta chain.